We begin with the raw amino-acid sequence, 257 residues long: Diaminopimelate epimerase (257 aa).

N13, Q46, and N66 together coordinate substrate. C75 functions as the Proton donor in the catalytic mechanism. Substrate is bound by residues G76–N77, N145, N175, and E193–R194. C202 functions as the Proton acceptor in the catalytic mechanism. G203 to S204 lines the substrate pocket.

It belongs to the diaminopimelate epimerase family. In terms of assembly, homodimer.

The protein resides in the cytoplasm. It catalyses the reaction (2S,6S)-2,6-diaminopimelate = meso-2,6-diaminopimelate. The protein operates within amino-acid biosynthesis; L-lysine biosynthesis via DAP pathway; DL-2,6-diaminopimelate from LL-2,6-diaminopimelate: step 1/1. Catalyzes the stereoinversion of LL-2,6-diaminopimelate (L,L-DAP) to meso-diaminopimelate (meso-DAP), a precursor of L-lysine and an essential component of the bacterial peptidoglycan. This Gluconobacter oxydans (strain 621H) (Gluconobacter suboxydans) protein is Diaminopimelate epimerase.